The following is a 372-amino-acid chain: Serine/threonine-protein kinase 17B (372 aa).

The region spanning 33 to 293 (ILTSKELGRG…AEICLSHSWL (261 aa)) is the Protein kinase domain. ATP is bound by residues 39-47 (LGRGKFAVV) and Lys62. The active-site Proton acceptor is Asp158. Residues 305 to 362 (EETSSSSQTQDHSVRSSEDKTSKSSCNGTCGDREDKENIPEDSSMVSKRFRFDDSLPN) are disordered. Residues 316 to 326 (HSVRSSEDKTS) show a composition bias toward basic and acidic residues.

It belongs to the protein kinase superfamily. CAMK Ser/Thr protein kinase family. DAP kinase subfamily. Interacts with CHP1; the interaction induces CHP1 to translocate from the Golgi to the nucleus. Post-translationally, autophosphorylated. Highly expressed in placenta, lung, pancreas. Lower levels in heart, brain, liver, skeletal muscle and kidney.

Its subcellular location is the nucleus. The protein resides in the cell membrane. It localises to the endoplasmic reticulum-Golgi intermediate compartment. It catalyses the reaction L-seryl-[protein] + ATP = O-phospho-L-seryl-[protein] + ADP + H(+). The catalysed reaction is L-threonyl-[protein] + ATP = O-phospho-L-threonyl-[protein] + ADP + H(+). Its function is as follows. Phosphorylates myosin light chains. Acts as a positive regulator of apoptosis. This chain is Serine/threonine-protein kinase 17B (STK17B), found in Homo sapiens (Human).